Consider the following 419-residue polypeptide: UDP-N-acetylglucosamine 1-carboxyvinyltransferase (419 aa).

A phosphoenolpyruvate-binding site is contributed by 22-23 (KN). R95 contacts UDP-N-acetyl-alpha-D-glucosamine. C119 serves as the catalytic Proton donor. C119 is subject to 2-(S-cysteinyl)pyruvic acid O-phosphothioketal. UDP-N-acetyl-alpha-D-glucosamine contacts are provided by residues 164 to 167 (KVSV), D308, and I330.

It belongs to the EPSP synthase family. MurA subfamily.

The protein localises to the cytoplasm. The catalysed reaction is phosphoenolpyruvate + UDP-N-acetyl-alpha-D-glucosamine = UDP-N-acetyl-3-O-(1-carboxyvinyl)-alpha-D-glucosamine + phosphate. It participates in cell wall biogenesis; peptidoglycan biosynthesis. Functionally, cell wall formation. Adds enolpyruvyl to UDP-N-acetylglucosamine. The chain is UDP-N-acetylglucosamine 1-carboxyvinyltransferase from Rickettsia prowazekii (strain Madrid E).